Consider the following 319-residue polypeptide: Acetyl-coenzyme A carboxylase carboxyl transferase subunit alpha (319 aa).

One can recognise a CoA carboxyltransferase C-terminal domain in the interval 38–292; it reads ALDKKAADLL…GKAIASMLAG (255 aa).

Belongs to the AccA family. Acetyl-CoA carboxylase is a heterohexamer composed of biotin carboxyl carrier protein (AccB), biotin carboxylase (AccC) and two subunits each of ACCase subunit alpha (AccA) and ACCase subunit beta (AccD).

It is found in the cytoplasm. The enzyme catalyses N(6)-carboxybiotinyl-L-lysyl-[protein] + acetyl-CoA = N(6)-biotinyl-L-lysyl-[protein] + malonyl-CoA. It functions in the pathway lipid metabolism; malonyl-CoA biosynthesis; malonyl-CoA from acetyl-CoA: step 1/1. In terms of biological role, component of the acetyl coenzyme A carboxylase (ACC) complex. First, biotin carboxylase catalyzes the carboxylation of biotin on its carrier protein (BCCP) and then the CO(2) group is transferred by the carboxyltransferase to acetyl-CoA to form malonyl-CoA. In Jannaschia sp. (strain CCS1), this protein is Acetyl-coenzyme A carboxylase carboxyl transferase subunit alpha.